The following is a 184-amino-acid chain: Ribosome-recycling factor (184 aa).

Positions 141–165 are disordered; that stretch reads DEKNGDITEDDLRSQTDDVQKATDN.

This sequence belongs to the RRF family.

The protein resides in the cytoplasm. Responsible for the release of ribosomes from messenger RNA at the termination of protein biosynthesis. May increase the efficiency of translation by recycling ribosomes from one round of translation to another. The protein is Ribosome-recycling factor of Staphylococcus epidermidis (strain ATCC 35984 / DSM 28319 / BCRC 17069 / CCUG 31568 / BM 3577 / RP62A).